The chain runs to 403 residues: Acetyl-CoA acetyltransferase 2 (403 aa).

The active-site Acyl-thioester intermediate is cysteine 97. Lysine 237 serves as a coordination point for CoA. Alanine 254 is a binding site for K(+). Serine 258 contributes to the CoA binding site. Valine 355 serves as a coordination point for K(+). Residues histidine 359 and cysteine 389 each act as proton acceptor in the active site.

It belongs to the thiolase-like superfamily. Thiolase family. In terms of tissue distribution, expressed in root tips, emerging leaves, young leaves, stems, and anthers at the microspore stage.

It is found in the cytoplasm. It localises to the peroxisome. The catalysed reaction is 2 acetyl-CoA = acetoacetyl-CoA + CoA. It participates in metabolic intermediate biosynthesis; (R)-mevalonate biosynthesis; (R)-mevalonate from acetyl-CoA: step 1/3. Functionally, catalyzes the condensation of two molecules of acetyl-CoA to produce acetoacetyl-CoA. Generates the bulk of the acetoacetyl-CoA precursor required for the cytosol-localized, mevalonate-derived isoprenoid biosynthesis. The generated isoprenoids are required for normal growth and development. Essential protein during embryogenesis. In Arabidopsis thaliana (Mouse-ear cress), this protein is Acetyl-CoA acetyltransferase 2.